A 574-amino-acid polypeptide reads, in one-letter code: Glutamyl-tRNA(Gln) amidotransferase subunit B, mitochondrial (574 aa).

The transit peptide at 1–12 (MIRQFVSHRGIP) directs the protein to the mitochondrion. The interval 34–62 (PLGRKNWSTSDEAKSKRAAMRKGGAPPPE) is disordered.

The protein belongs to the GatB/GatE family. GatB subfamily. In terms of assembly, subunit of the heterotrimeric GatCAB amidotransferase (AdT) complex, composed of A, B and C subunits.

The protein localises to the mitochondrion. The enzyme catalyses L-glutamyl-tRNA(Gln) + L-glutamine + ATP + H2O = L-glutaminyl-tRNA(Gln) + L-glutamate + ADP + phosphate + H(+). Functionally, allows the formation of correctly charged Gln-tRNA(Gln) through the transamidation of misacylated Glu-tRNA(Gln) in the mitochondria. The reaction takes place in the presence of glutamine and ATP through an activated gamma-phospho-Glu-tRNA(Gln). This is Glutamyl-tRNA(Gln) amidotransferase subunit B, mitochondrial from Ajellomyces capsulatus (strain H143) (Darling's disease fungus).